Reading from the N-terminus, the 1026-residue chain is P3N-PIPO polyprotein (1026 aa).

A Peptidase S30 domain is found at 165–308 (RMSEASLQLF…KEQSNEIVHY (144 aa)). Catalysis depends on for P1 proteinase activity residues histidine 216, aspartate 225, and serine 259. Positions 360–363 (KITC) match the Involved in interaction with stylet and aphid transmission motif. The Involved in virions binding and aphid transmission motif lies at 618-620 (PTK). The 123-residue stretch at 644 to 766 (MFIAKAGYCY…DSSMKTYLVG (123 aa)) folds into the Peptidase C6 domain. Catalysis depends on for helper component proteinase activity residues cysteine 652 and histidine 725.

Belongs to the potyviridae P3N-PIPO polyprotein family. Interacts (via PIPO domain) with host PCaP1 protein; this interaction may help to anchor the movement complex to the plasma membrane from which the complex could move to the plasmodesmata. In terms of processing, potyviral RNA is expressed as two polyproteins which undergo post-translational proteolytic processing. Genome polyprotein is processed by NIa-pro, P1 and HC-pro proteinases resulting in the production of at least ten individual proteins. P3N-PIPO is cleaved by P1 and HC-pro proteinases resulting in the production of three individual proteins. The P1 proteinase and the HC-pro cleave only their respective C-termini autocatalytically.

The protein localises to the host cell junction. It localises to the host plasmodesma. It carries out the reaction Hydrolyzes a Gly-|-Gly bond at its own C-terminus, commonly in the sequence -Tyr-Xaa-Val-Gly-|-Gly, in the processing of the potyviral polyprotein.. Required for aphid transmission and also has proteolytic activity. Only cleaves a Gly-Gly dipeptide at its own C-terminus. Interacts with virions and aphid stylets. Acts as a suppressor of RNA-mediated gene silencing, also known as post-transcriptional gene silencing (PTGS), a mechanism of plant viral defense that limits the accumulation of viral RNAs. May have RNA-binding activity. In terms of biological role, allows efficient cell to cell propagation, by bypassing the host cell wall barrier. Transports viral genome to neighboring plant cells directly through plasmosdesmata, without any budding. The chain is P3N-PIPO polyprotein from Prunus armeniaca (Apricot).